We begin with the raw amino-acid sequence, 248 residues long: tRNA (guanine-N(1)-)-methyltransferase (248 aa).

S-adenosyl-L-methionine contacts are provided by residues glycine 113 and 133–138; that span reads VGDYVL.

Belongs to the RNA methyltransferase TrmD family. As to quaternary structure, homodimer.

Its subcellular location is the cytoplasm. It carries out the reaction guanosine(37) in tRNA + S-adenosyl-L-methionine = N(1)-methylguanosine(37) in tRNA + S-adenosyl-L-homocysteine + H(+). Functionally, specifically methylates guanosine-37 in various tRNAs. The polypeptide is tRNA (guanine-N(1)-)-methyltransferase (Shewanella sp. (strain ANA-3)).